The sequence spans 326 residues: Vitamin B12 import system permease protein BtuC (326 aa).

Helical transmembrane passes span 19-39 (LSVLMLLALLLSLCAGELWIL), 61-81 (LAVLLVGAALAISGAVMQALF), 88-108 (PGLLGVSNGAGVGLIAAVLLG), 112-132 (LPNWALGLCAIAGALIITLIL), 146-166 (LLAGVALGIICSALMTWAIYF), 184-204 (GGVDWRQSWLMLALIPVLLWI), 240-260 (GWMVGVSVALAGAIGFIGLVI), 274-294 (VLLPGCALAGASALLLADIVA), and 302-322 (ELPIGVVTATLGAPVFIWLLL).

Belongs to the binding-protein-dependent transport system permease family. FecCD subfamily. The complex is composed of two ATP-binding proteins (BtuD), two transmembrane proteins (BtuC) and a solute-binding protein (BtuF).

It localises to the cell inner membrane. Its function is as follows. Part of the ABC transporter complex BtuCDF involved in vitamin B12 import. Involved in the translocation of the substrate across the membrane. The protein is Vitamin B12 import system permease protein BtuC of Escherichia coli O127:H6 (strain E2348/69 / EPEC).